Consider the following 408-residue polypeptide: Glutamate N-acetyltransferase (408 aa).

Substrate-binding residues include T150, K176, T189, E271, N403, and T408. The active-site Nucleophile is T189.

Belongs to the ArgJ family. Heterotetramer of two alpha and two beta chains.

Its subcellular location is the cytoplasm. It carries out the reaction N(2)-acetyl-L-ornithine + L-glutamate = N-acetyl-L-glutamate + L-ornithine. Its pathway is amino-acid biosynthesis; L-arginine biosynthesis; L-ornithine and N-acetyl-L-glutamate from L-glutamate and N(2)-acetyl-L-ornithine (cyclic): step 1/1. Its function is as follows. Catalyzes the transfer of the acetyl group from N(2)-acetylornithine to glutamate, forming N-acetylglutamate and L-ornithine. In Methanococcus vannielii (strain ATCC 35089 / DSM 1224 / JCM 13029 / OCM 148 / SB), this protein is Glutamate N-acetyltransferase.